The sequence spans 474 residues: tRNA-2-methylthio-N(6)-dimethylallyladenosine synthase (474 aa).

The MTTase N-terminal domain occupies 3–120 (KKLHIKTWGC…LPEMINSVRG (118 aa)). [4Fe-4S] cluster contacts are provided by Cys-12, Cys-49, Cys-83, Cys-157, Cys-161, and Cys-164. The 233-residue stretch at 143–375 (RAEGPTAFVS…QERINQQAMA (233 aa)) folds into the Radical SAM core domain. The TRAM domain maps to 378–441 (RRMLGTVQRI…TNSLRGKVVR (64 aa)).

It belongs to the methylthiotransferase family. MiaB subfamily. Monomer. [4Fe-4S] cluster serves as cofactor.

It is found in the cytoplasm. The enzyme catalyses N(6)-dimethylallyladenosine(37) in tRNA + (sulfur carrier)-SH + AH2 + 2 S-adenosyl-L-methionine = 2-methylsulfanyl-N(6)-dimethylallyladenosine(37) in tRNA + (sulfur carrier)-H + 5'-deoxyadenosine + L-methionine + A + S-adenosyl-L-homocysteine + 2 H(+). Functionally, catalyzes the methylthiolation of N6-(dimethylallyl)adenosine (i(6)A), leading to the formation of 2-methylthio-N6-(dimethylallyl)adenosine (ms(2)i(6)A) at position 37 in tRNAs that read codons beginning with uridine. This is tRNA-2-methylthio-N(6)-dimethylallyladenosine synthase from Citrobacter koseri (strain ATCC BAA-895 / CDC 4225-83 / SGSC4696).